The primary structure comprises 139 residues: Ribulose bisphosphate carboxylase small subunit (139 aa).

Belongs to the RuBisCO small chain family. Heterohexadecamer of 8 large and 8 small subunits.

The protein resides in the plastid. It is found in the chloroplast. RuBisCO catalyzes two reactions: the carboxylation of D-ribulose 1,5-bisphosphate, the primary event in carbon dioxide fixation, as well as the oxidative fragmentation of the pentose substrate in the photorespiration process. Both reactions occur simultaneously and in competition at the same active site. Although the small subunit is not catalytic it is essential for maximal activity. The protein is Ribulose bisphosphate carboxylase small subunit of Thalassiosira nordenskioeldii (Marine diatom).